A 719-amino-acid chain; its full sequence is ATP-dependent RNA helicase SUV3 homolog, mitochondrial (719 aa).

A mitochondrion-targeting transit peptide spans 1 to 18; the sequence is MRRASGVLRVLGGLTQRC. Residues 16-42 are disordered; sequence QRCSTSSTPSSSRFPAMNSRRKRNSVR. The 139-residue stretch at 181–319 folds into the Helicase ATP-binding domain; that stretch reads EARSVTRKIF…PAAIDIVKKL (139 aa). Residue 194 to 201 coordinates ATP; the sequence is GPTNSGKT. In terms of domain architecture, Helicase C-terminal spans 343-499; that stretch reads KAIESYSNIE…PTYDQIETFS (157 aa). The tract at residues 662–692 is disordered; that stretch reads SKAAGSSKSSEGKRENPSKSEREKPNKRSSI. Over residues 671–687 the composition is skewed to basic and acidic residues; the sequence is SEGKRENPSKSEREKPN. Residues 693-717 are a coiled coil; that stretch reads LEALLKRADISEDDLEQLREELNKN.

The protein belongs to the helicase family. Requires Mg(2+) as cofactor. Mn(2+) serves as cofactor.

The protein localises to the mitochondrion matrix. Its subcellular location is the nucleus. The enzyme catalyses ATP + H2O = ADP + phosphate + H(+). ATPase and DNA/RNA helicase able to unwind DNA/DNA, DNA/RNA and RNA/RNA duplexes in the 5'-3' direction. This Caenorhabditis elegans protein is ATP-dependent RNA helicase SUV3 homolog, mitochondrial.